The chain runs to 401 residues: Imidazolonepropionase (401 aa).

Residues His-70 and His-72 each contribute to the Fe(3+) site. 2 residues coordinate Zn(2+): His-70 and His-72. Arg-79, Tyr-142, and His-175 together coordinate 4-imidazolone-5-propanoate. Tyr-142 serves as a coordination point for N-formimidoyl-L-glutamate. His-238 contacts Fe(3+). His-238 contributes to the Zn(2+) binding site. Residue Gln-241 participates in 4-imidazolone-5-propanoate binding. A Fe(3+)-binding site is contributed by Asp-313. Zn(2+) is bound at residue Asp-313. Asn-315 and Gly-317 together coordinate N-formimidoyl-L-glutamate. Thr-318 contributes to the 4-imidazolone-5-propanoate binding site.

The protein belongs to the metallo-dependent hydrolases superfamily. HutI family. Zn(2+) serves as cofactor. Fe(3+) is required as a cofactor.

The protein localises to the cytoplasm. The enzyme catalyses 4-imidazolone-5-propanoate + H2O = N-formimidoyl-L-glutamate. It functions in the pathway amino-acid degradation; L-histidine degradation into L-glutamate; N-formimidoyl-L-glutamate from L-histidine: step 3/3. Its function is as follows. Catalyzes the hydrolytic cleavage of the carbon-nitrogen bond in imidazolone-5-propanoate to yield N-formimidoyl-L-glutamate. It is the third step in the universal histidine degradation pathway. The sequence is that of Imidazolonepropionase from Acidiphilium cryptum (strain JF-5).